We begin with the raw amino-acid sequence, 631 residues long: DNA mismatch repair protein MutL (631 aa).

It belongs to the DNA mismatch repair MutL/HexB family.

Functionally, this protein is involved in the repair of mismatches in DNA. It is required for dam-dependent methyl-directed DNA mismatch repair. May act as a 'molecular matchmaker', a protein that promotes the formation of a stable complex between two or more DNA-binding proteins in an ATP-dependent manner without itself being part of a final effector complex. The chain is DNA mismatch repair protein MutL from Mannheimia succiniciproducens (strain KCTC 0769BP / MBEL55E).